A 270-amino-acid polypeptide reads, in one-letter code: uncharacterized protein (270 aa).

An N-terminal signal peptide occupies residues Met1–Arg23.

This is an uncharacterized protein from Archaeoglobus fulgidus (strain ATCC 49558 / DSM 4304 / JCM 9628 / NBRC 100126 / VC-16).